Consider the following 1388-residue polypeptide: DNA-directed RNA polymerase subunit beta' (1388 aa).

4 residues coordinate Zn(2+): Cys-76, Cys-78, Cys-91, and Cys-94. 3 residues coordinate Mg(2+): Asp-467, Asp-469, and Asp-471. The Zn(2+) site is built by Cys-810, Cys-884, Cys-891, and Cys-894.

It belongs to the RNA polymerase beta' chain family. As to quaternary structure, the RNAP catalytic core consists of 2 alpha, 1 beta, 1 beta' and 1 omega subunit. When a sigma factor is associated with the core the holoenzyme is formed, which can initiate transcription. Mg(2+) serves as cofactor. It depends on Zn(2+) as a cofactor.

The enzyme catalyses RNA(n) + a ribonucleoside 5'-triphosphate = RNA(n+1) + diphosphate. Functionally, DNA-dependent RNA polymerase catalyzes the transcription of DNA into RNA using the four ribonucleoside triphosphates as substrates. The polypeptide is DNA-directed RNA polymerase subunit beta' (Lawsonia intracellularis (strain PHE/MN1-00)).